We begin with the raw amino-acid sequence, 309 residues long: Porphobilinogen deaminase (309 aa).

The residue at position 242 (C242) is an S-(dipyrrolylmethanemethyl)cysteine.

This sequence belongs to the HMBS family. In terms of assembly, monomer. It depends on dipyrromethane as a cofactor.

It catalyses the reaction 4 porphobilinogen + H2O = hydroxymethylbilane + 4 NH4(+). The protein operates within porphyrin-containing compound metabolism; protoporphyrin-IX biosynthesis; coproporphyrinogen-III from 5-aminolevulinate: step 2/4. Tetrapolymerization of the monopyrrole PBG into the hydroxymethylbilane pre-uroporphyrinogen in several discrete steps. The sequence is that of Porphobilinogen deaminase from Legionella pneumophila subsp. pneumophila (strain Philadelphia 1 / ATCC 33152 / DSM 7513).